Reading from the N-terminus, the 957-residue chain is Collagen alpha-1(XXI) chain (957 aa).

The first 16 residues, 1-16, serve as a signal peptide directing secretion; that stretch reads MPGIIYILCSILLIES. The VWFA domain maps to 37-211; sequence DLVFILDGSW…RIREIMKQKL (175 aa). In terms of domain architecture, Laminin G-like spans 230–412; sequence GFDILLGLGI…LQKLRIYCDP (183 aa). Disordered regions lie at residues 441 to 788 and 820 to 935; these read PAPC…GKEQ and CKTQ…DAGI. Collagen-like domains follow at residues 448-501, 502-543, 544-591, 592-642, 643-684, 685-741, 742-786, and 825-882; these read PGEK…PRGF, AGLK…DKGD, IGID…EEGK, PGPP…ISGP, EGIS…IPGQ, QGYT…EIGE, HGHR…QQGK, and GSPG…GNKG. Low complexity predominate over residues 483-498; sequence TSGSPGIPGSPGVQGP. The segment covering 535–556 has biased composition (basic and acidic residues); that stretch reads MGPKGDKGDIGIDGKKGTKGDK. Low complexity-rich tracts occupy residues 597–616 and 633–649; these read MEGLRGLPGIPGIPGNDGAN and PTGTPGISGPEGISGPQ. Over residues 733-744 the composition is skewed to basic and acidic residues; sequence KGEKGEIGEHGH. Over residues 775 to 786 the composition is skewed to low complexity; it reads QGLPGPKGQQGK.

This sequence belongs to the fibril-associated collagens with interrupted helices (FACIT) family.

Its subcellular location is the secreted. The protein localises to the extracellular space. The protein resides in the extracellular matrix. It is found in the cytoplasm. The sequence is that of Collagen alpha-1(XXI) chain (col21a1) from Xenopus laevis (African clawed frog).